The primary structure comprises 958 residues: Coiled-coil domain-containing protein 33 (958 aa).

Residues 214–353 form the C2 domain; that stretch reads SPEEPLIASQ…LVKPTESGKA (140 aa). Positions 602-617 are enriched in polar residues; the sequence is SKDTVSSTMDLSTSTP. Residues 602–628 form a disordered region; that stretch reads SKDTVSSTMDLSTSTPREAEEEPLVPE. Coiled-coil stretches lie at residues 632–774 and 859–899; these read DTEM…LEDR and FNLL…RLQE. A disordered region spans residues 899-958; that stretch reads EQEKGFRHPSNSIIIEQPSALTHSMDLKQPSELEPLLPSSDSKLNKPLSPQKETANSQQT. Polar residues-rich tracts occupy residues 907 to 920 and 949 to 958; these read PSNS…SALT and QKETANSQQT.

The polypeptide is Coiled-coil domain-containing protein 33 (CCDC33) (Homo sapiens (Human)).